Reading from the N-terminus, the 716-residue chain is Fatty acid oxidation complex subunit alpha (716 aa).

Positions 1 to 189 (MIYQSPTIQV…KVGAVDAVVA (189 aa)) are enoyl-CoA hydratase/isomerase. Asp296 serves as a coordination point for substrate. Residues 311 to 716 (KEVNNAAVLG…AANNGSYYQA (406 aa)) form a 3-hydroxyacyl-CoA dehydrogenase region. Residues Met324, Asp343, 400–402 (VVE), Lys407, and Ser429 contribute to the NAD(+) site. The active-site For 3-hydroxyacyl-CoA dehydrogenase activity is His450. Asn453 provides a ligand contact to NAD(+). Residues Asn500 and Tyr660 each coordinate substrate.

In the N-terminal section; belongs to the enoyl-CoA hydratase/isomerase family. The protein in the C-terminal section; belongs to the 3-hydroxyacyl-CoA dehydrogenase family. As to quaternary structure, heterotetramer of two alpha chains (FadB) and two beta chains (FadA).

It catalyses the reaction a (3S)-3-hydroxyacyl-CoA + NAD(+) = a 3-oxoacyl-CoA + NADH + H(+). The enzyme catalyses a (3S)-3-hydroxyacyl-CoA = a (2E)-enoyl-CoA + H2O. It carries out the reaction a 4-saturated-(3S)-3-hydroxyacyl-CoA = a (3E)-enoyl-CoA + H2O. The catalysed reaction is (3S)-3-hydroxybutanoyl-CoA = (3R)-3-hydroxybutanoyl-CoA. It catalyses the reaction a (3Z)-enoyl-CoA = a 4-saturated (2E)-enoyl-CoA. The enzyme catalyses a (3E)-enoyl-CoA = a 4-saturated (2E)-enoyl-CoA. It functions in the pathway lipid metabolism; fatty acid beta-oxidation. Functionally, involved in the aerobic and anaerobic degradation of long-chain fatty acids via beta-oxidation cycle. Catalyzes the formation of 3-oxoacyl-CoA from enoyl-CoA via L-3-hydroxyacyl-CoA. It can also use D-3-hydroxyacyl-CoA and cis-3-enoyl-CoA as substrate. The protein is Fatty acid oxidation complex subunit alpha of Shewanella baltica (strain OS195).